The primary structure comprises 336 residues: D-alanine--D-alanine ligase (336 aa).

One can recognise an ATP-grasp domain in the interval 124–330; the sequence is KMWFSALGIP…FTEYLSLVIN (207 aa). 154–209 is an ATP binding site; it reads ALENWGSIFVKAASQGSSVGCYKVDDSSKVADVLKDAFGYAPYVIVEKTIKARELE. Residues aspartate 284, glutamate 297, and asparagine 299 each coordinate Mg(2+).

Belongs to the D-alanine--D-alanine ligase family. The cofactor is Mg(2+). Mn(2+) is required as a cofactor.

Its subcellular location is the cytoplasm. It carries out the reaction 2 D-alanine + ATP = D-alanyl-D-alanine + ADP + phosphate + H(+). Its pathway is cell wall biogenesis; peptidoglycan biosynthesis. In terms of biological role, cell wall formation. The protein is D-alanine--D-alanine ligase of Shewanella sp. (strain ANA-3).